Reading from the N-terminus, the 205-residue chain is Large ribosomal subunit protein uL4 (205 aa).

The tract at residues G54–R78 is disordered. The segment covering K62–R71 has biased composition (basic residues).

The protein belongs to the universal ribosomal protein uL4 family. As to quaternary structure, part of the 50S ribosomal subunit.

Its function is as follows. One of the primary rRNA binding proteins, this protein initially binds near the 5'-end of the 23S rRNA. It is important during the early stages of 50S assembly. It makes multiple contacts with different domains of the 23S rRNA in the assembled 50S subunit and ribosome. Functionally, forms part of the polypeptide exit tunnel. The polypeptide is Large ribosomal subunit protein uL4 (Ehrlichia chaffeensis (strain ATCC CRL-10679 / Arkansas)).